A 106-amino-acid chain; its full sequence is RxLR effector protein PSR1 (106 aa).

The signal sequence occupies residues 1-20; it reads MRLTYVLLVAVTTLLVSCDA. A RxLR-dEER motif is present at residues 33-46; the sequence is RLLRFVEAADEEER. The segment at 50-106 is WY domain; it reads FSPEKLRKMLGDETYRLKKFGKWDSDGHTFDGLKHYLLLSDSSMVKLRNMYKAWLEQ. The Bipartite nuclear localization signal (NLS) signature appears at 56 to 69; the sequence is RKMLGDETYRLKKF.

Belongs to the RxLR effector family. Interacts with host PINP1.

Its subcellular location is the secreted. It localises to the host nucleus. Functionally, secreted effector that possesses RNA silencing suppression activity by inhibiting the biogenesis of small RNAs in the host plant to promote enhanced susceptibility of host to the pathogen during infection. Interferes with secondary siRNA production by associating with host nuclear protein PINP1 that acts as a regulator of the accumulation of both microRNAs and endogenous small interfering RNAs. This chain is RxLR effector protein PSR1, found in Phytophthora sojae (Soybean stem and root rot agent).